Reading from the N-terminus, the 224-residue chain is Cytidylate kinase (224 aa).

13-21 (GPSASGKGT) lines the ATP pocket.

Belongs to the cytidylate kinase family. Type 1 subfamily.

Its subcellular location is the cytoplasm. The enzyme catalyses CMP + ATP = CDP + ADP. It catalyses the reaction dCMP + ATP = dCDP + ADP. The chain is Cytidylate kinase from Nitrosomonas eutropha (strain DSM 101675 / C91 / Nm57).